The chain runs to 243 residues: Thiocyanate hydrolase subunit gamma (243 aa).

Co(3+) is bound by residues Cys-128, Cys-131, Ser-132, and Cys-133. A Cysteine sulfinic acid (-SO2H) modification is found at Cys-131. Cysteine sulfenic acid (-SOH) is present on Cys-133.

It belongs to the nitrile hydratase subunit alpha family. As to quaternary structure, heterododecamer consisting of 4 alpha, 4 beta, and 4 gamma subunits. Co(3+) serves as cofactor.

It catalyses the reaction thiocyanate + H2O + 2 H(+) = carbonyl sulfide + NH4(+). The protein operates within organosulfur degradation; thiocyanate degradation. Its function is as follows. Involved in the degradation of thiocyanate. The sequence is that of Thiocyanate hydrolase subunit gamma (scnC) from Thiobacillus thioparus.